Consider the following 865-residue polypeptide: Probable alpha/beta-glucosidase ARB_02101 (865 aa).

The signal sequence occupies residues 1–21 (MFGRTLALAAVFATTVLSAAA). N-linked (GlcNAc...) asparagine glycosylation is found at Asn-101 and Asn-299. Asp-428 serves as the catalytic Nucleophile. Glu-431 is a catalytic residue. Asn-515 is a glycosylation site (N-linked (GlcNAc...) asparagine). Asp-548 acts as the Proton donor in catalysis. N-linked (GlcNAc...) asparagine glycans are attached at residues Asn-549, Asn-585, and Asn-748.

It belongs to the glycosyl hydrolase 31 family.

Its subcellular location is the secreted. It carries out the reaction Hydrolysis of terminal, non-reducing (1-&gt;4)-linked alpha-D-glucose residues with release of alpha-D-glucose.. The catalysed reaction is Hydrolysis of terminal, non-reducing beta-D-glucosyl residues with release of beta-D-glucose.. In terms of biological role, glucosidase involved in the degradation of cellulosic biomass. Has both alpha- and beta-glucosidase activity. The sequence is that of Probable alpha/beta-glucosidase ARB_02101 from Arthroderma benhamiae (strain ATCC MYA-4681 / CBS 112371) (Trichophyton mentagrophytes).